Consider the following 457-residue polypeptide: Bifunctional protein GlmU (457 aa).

Residues 1 to 230 are pyrophosphorylase; it reads MSKRYAVVLA…FEESLGVNDR (230 aa). UDP-N-acetyl-alpha-D-glucosamine contacts are provided by residues 9-12, Lys23, Gln73, and 78-79; these read LAAG and GT. A Mg(2+)-binding site is contributed by Asp103. UDP-N-acetyl-alpha-D-glucosamine is bound by residues Gly140, Glu155, Asn170, and Asn228. Position 228 (Asn228) interacts with Mg(2+). Positions 231 to 251 are linker; it reads IALAEASRLMQRRINENHMRN. The tract at residues 252–457 is N-acetyltransferase; the sequence is GVTLVNPENT…GYAKHLNHGK (206 aa). Residues Arg333 and Lys351 each contribute to the UDP-N-acetyl-alpha-D-glucosamine site. The Proton acceptor role is filled by His363. Residues Tyr366 and Asn377 each contribute to the UDP-N-acetyl-alpha-D-glucosamine site. Acetyl-CoA contacts are provided by residues 386-387, Ala423, and Arg440; that span reads NY.

It in the N-terminal section; belongs to the N-acetylglucosamine-1-phosphate uridyltransferase family. This sequence in the C-terminal section; belongs to the transferase hexapeptide repeat family. Homotrimer. It depends on Mg(2+) as a cofactor.

Its subcellular location is the cytoplasm. The catalysed reaction is alpha-D-glucosamine 1-phosphate + acetyl-CoA = N-acetyl-alpha-D-glucosamine 1-phosphate + CoA + H(+). It carries out the reaction N-acetyl-alpha-D-glucosamine 1-phosphate + UTP + H(+) = UDP-N-acetyl-alpha-D-glucosamine + diphosphate. It participates in nucleotide-sugar biosynthesis; UDP-N-acetyl-alpha-D-glucosamine biosynthesis; N-acetyl-alpha-D-glucosamine 1-phosphate from alpha-D-glucosamine 6-phosphate (route II): step 2/2. It functions in the pathway nucleotide-sugar biosynthesis; UDP-N-acetyl-alpha-D-glucosamine biosynthesis; UDP-N-acetyl-alpha-D-glucosamine from N-acetyl-alpha-D-glucosamine 1-phosphate: step 1/1. Its pathway is bacterial outer membrane biogenesis; LPS lipid A biosynthesis. Its function is as follows. Catalyzes the last two sequential reactions in the de novo biosynthetic pathway for UDP-N-acetylglucosamine (UDP-GlcNAc). The C-terminal domain catalyzes the transfer of acetyl group from acetyl coenzyme A to glucosamine-1-phosphate (GlcN-1-P) to produce N-acetylglucosamine-1-phosphate (GlcNAc-1-P), which is converted into UDP-GlcNAc by the transfer of uridine 5-monophosphate (from uridine 5-triphosphate), a reaction catalyzed by the N-terminal domain. This Listeria monocytogenes serotype 4b (strain CLIP80459) protein is Bifunctional protein GlmU.